The sequence spans 215 residues: Cytochrome b6 (215 aa).

The chain crosses the membrane as a helical span at residues 32–52 (IFYCLGGVTLICFLVQFATGF). Position 35 (Cys35) interacts with heme c. His86 and His100 together coordinate heme b. A run of 3 helical transmembrane segments spans residues 90 to 110 (ASMM…TGGF), 116 to 136 (LTWV…VTGY), and 186 to 206 (AHTF…FLMI). Heme b is bound by residues His187 and His202.

It belongs to the cytochrome b family. PetB subfamily. As to quaternary structure, the 4 large subunits of the cytochrome b6-f complex are cytochrome b6, subunit IV (17 kDa polypeptide, PetD), cytochrome f and the Rieske protein, while the 4 small subunits are PetG, PetL, PetM and PetN. The complex functions as a dimer. Heme b is required as a cofactor. Heme c serves as cofactor.

Its subcellular location is the cell inner membrane. Component of the cytochrome b6-f complex, which mediates electron transfer between photosystem II (PSII) and photosystem I (PSI), cyclic electron flow around PSI, and state transitions. The sequence is that of Cytochrome b6 from Gloeobacter violaceus (strain ATCC 29082 / PCC 7421).